Here is a 697-residue protein sequence, read N- to C-terminus: General transcription factor IIH subunit 1 (697 aa).

Over residues 115 to 136 (LPVSASNGSNTTSPTNGTSPIN) the composition is skewed to low complexity. Disordered stretches follow at residues 115–141 (LPVS…TSPT) and 228–250 (KNDS…ADVR). BSD domains are found at residues 174–231 (LSKL…KNDS) and 255–307 (TPNA…YFYR). Positions 412–422 (KNLKKTKKDEN) are enriched in basic and acidic residues. Positions 412–462 (KNLKKTKKDENSTSTPTTTTTTTNTTNTTNTTTTTTTNNTTIKDPNLYNGD) are disordered. Positions 423–452 (STSTPTTTTTTTNTTNTTNTTTTTTTNNTT) are enriched in low complexity.

This sequence belongs to the TFB1 family. In terms of assembly, component of the 7-subunit TFIIH core complex composed of XPB/repB, XPD/repD, gtf2h1, gtf2h2, gtf2h3, gtf2h4 and gtf2h5, which is active in NER. The core complex associates with the 3-subunit CDK-activating kinase (CAK) module composed of cycH/cyclin H, cdk7 and mnat1 to form the 10-subunit holoenzyme (holo-TFIIH) active in transcription.

The protein localises to the nucleus. Its function is as follows. Component of the general transcription and DNA repair factor IIH (TFIIH) core complex, which is involved in general and transcription-coupled nucleotide excision repair (NER) of damaged DNA and, when complexed to CAK, in RNA transcription by RNA polymerase II. In NER, TFIIH acts by opening DNA around the lesion to allow the excision of the damaged oligonucleotide and its replacement by a new DNA fragment. In transcription, TFIIH has an essential role in transcription initiation. When the pre-initiation complex (PIC) has been established, TFIIH is required for promoter opening and promoter escape. Phosphorylation of the C-terminal tail (CTD) of the largest subunit of RNA polymerase II by the kinase module CAK controls the initiation of transcription. In Dictyostelium discoideum (Social amoeba), this protein is General transcription factor IIH subunit 1 (gtf2h1).